The following is a 285-amino-acid chain: Bifunctional protein FolD (285 aa).

NADP(+) is bound by residues 165–167 and serine 190; that span reads GRS.

This sequence belongs to the tetrahydrofolate dehydrogenase/cyclohydrolase family. Homodimer.

The catalysed reaction is (6R)-5,10-methylene-5,6,7,8-tetrahydrofolate + NADP(+) = (6R)-5,10-methenyltetrahydrofolate + NADPH. It carries out the reaction (6R)-5,10-methenyltetrahydrofolate + H2O = (6R)-10-formyltetrahydrofolate + H(+). It functions in the pathway one-carbon metabolism; tetrahydrofolate interconversion. In terms of biological role, catalyzes the oxidation of 5,10-methylenetetrahydrofolate to 5,10-methenyltetrahydrofolate and then the hydrolysis of 5,10-methenyltetrahydrofolate to 10-formyltetrahydrofolate. This Streptococcus pneumoniae serotype 4 (strain ATCC BAA-334 / TIGR4) protein is Bifunctional protein FolD.